The chain runs to 122 residues: Acidic phospholipase A2 (122 aa).

Intrachain disulfides connect Cys-26/Cys-115, Cys-28/Cys-44, Cys-43/Cys-95, Cys-49/Cys-122, Cys-50/Cys-88, Cys-57/Cys-81, and Cys-75/Cys-86. Ca(2+) is bound by residues Tyr-27, Gly-29, and Gly-31. His-47 is a catalytic residue. Asp-48 provides a ligand contact to Ca(2+). Residue Asp-89 is part of the active site.

This sequence belongs to the phospholipase A2 family. Group II subfamily. D49 sub-subfamily. It depends on Ca(2+) as a cofactor. Contains 7 disulfide bonds. In terms of tissue distribution, expressed by the venom gland.

Its subcellular location is the secreted. The enzyme catalyses a 1,2-diacyl-sn-glycero-3-phosphocholine + H2O = a 1-acyl-sn-glycero-3-phosphocholine + a fatty acid + H(+). Functionally, snake venom phospholipase A2 (PLA2) that displays low systemic toxicity and causes severe symptoms only at very high concentrations (15 mg/kg). Has neither coagulant nor anticoagulant activity. PLA2 catalyzes the calcium-dependent hydrolysis of the 2-acyl groups in 3-sn-phosphoglycerides. The chain is Acidic phospholipase A2 from Bothrops ammodytoides (Yararanata).